A 227-amino-acid polypeptide reads, in one-letter code: Protein PhlB (227 aa).

Positions 1–35 (MPEGRRLRRALAIALLALVAVTGLLMMAKEQQMGQ) are cleaved as a signal peptide. 4 ANK repeats span residues 75 to 104 (RQVT…DPAA), 108 to 137 (DGNS…QMNV), 142 to 171 (TGAT…DTTL), and 175 to 204 (LGDT…MPGR).

Its function is as follows. Cell-protective protein that neutralizes the intracellular lysis capacity of phospholipase A1 through a direct interaction with the enzyme. The chain is Protein PhlB (phlB) from Serratia liquefaciens.